The sequence spans 103 residues: Large ribosomal subunit protein bL21 (103 aa).

The protein belongs to the bacterial ribosomal protein bL21 family. Part of the 50S ribosomal subunit. Contacts protein L20.

Functionally, this protein binds to 23S rRNA in the presence of protein L20. The sequence is that of Large ribosomal subunit protein bL21 from Serratia proteamaculans (strain 568).